A 735-amino-acid polypeptide reads, in one-letter code: 2-5A-dependent ribonuclease (735 aa).

Residues 1 to 21 are disordered; that stretch reads METPDYNTPQGGTPSAGSQRT. ANK repeat units lie at residues 24–53, 58–87, 91–120, 124–153, 167–197, 201–234, 238–268, 272–301, and 303–328; these read EDDSSLIKAVQKGDVVRVQQLLEKGADANA, WGWTPLHNAVQAGRVDIVNLLLSHGADPHR, NGATPFIIAGIQGDVKLLEILLSCGADVNE, NGFTAFMEAAERGNAEALRFLFAKGANVNL, GGATALMSAAEKGHLEVLRILLNDMKAEVDA, MGRNALIRTLLNWDCENVEEITSILIQHGADVNV, RGKTPLIAAVERKHTGLVQMLLSREGINIDA, EGKTALLIAVDKQLKEIVQLLLEKGADKCD, and LVWIARRNHDYHLVKLLLPYVANPDT. The interval 26 to 51 is binding to TMEV Leader protein; it reads DSSLIKAVQKGDVVRVQQLLEKGADA. 2-5A binding (P-loop) regions lie at residues 229–242 and 253–275; these read GADVNVRGERGKTP and GLVQMLLSREGINIDARDNEGKT. Residues 364–584 enclose the Protein kinase domain; sequence IHDDYKIAGT…LVDLLGHPFF (221 aa). The segment at 401 to 436 adopts a C6-type zinc-finger fold; it reads CKEVSCLRDCGDHSNLVAFYGREDDKGCLYVCVSLC. Residues 587–722 enclose the KEN domain; that stretch reads WENRYRTLRN…KHFPQPPPRL (136 aa). Positions 714–735 are disordered; the sequence is HFPQPPPRLSVPEAVGPGGIQS.

Belongs to the protein kinase superfamily. In terms of assembly, (Microbial infection) Interacts (via N-terminus) with TMEV leader protein; this interaction prevents RNASEL activation by its substrate 2'-5' oligoadenylates. Monomer (inactive form) or homodimer. Interacts with ABCE1; this interaction inhibits the RNASEL. Requires Mn(2+) as cofactor. Mg(2+) is required as a cofactor. As to expression, expressed in spleen, thymus, lung, testis, kidney, liver and heart.

It is found in the cytoplasm. Its subcellular location is the mitochondrion. After binding to 2-5A (5'-phosphorylated 2',5'-linked oligoadenylates) the homodimerization and subsequent activation occurs. Inhibited by RNASEL inhibitor ABCE1/RLI, a cytoplasmic member of the ATP-binding cassette (ABC) transporter family. Its function is as follows. Endoribonuclease that functions in the interferon (IFN) antiviral response. In INF treated and virus infected cells, RNASEL probably mediates its antiviral effects through a combination of direct cleavage of single-stranded viral RNAs, inhibition of protein synthesis through the degradation of rRNA, induction of apoptosis, and induction of other antiviral genes. RNASEL mediated apoptosis is the result of a JNK-dependent stress-response pathway leading to cytochrome c release from mitochondria and caspase-dependent apoptosis. Therefore, activation of RNASEL could lead to elimination of virus infected cells under some circumstances. In the crosstalk between autophagy and apoptosis proposed to induce autophagy as an early stress response to small double-stranded RNA and at later stages of prolonged stress to activate caspase-dependent proteolytic cleavage of BECN1 to terminate autophagy and promote apoptosis. Might play a central role in the regulation of mRNA turnover. Cleaves 3' of UpNp dimers, with preference for UU and UA sequences, to sets of discrete products ranging from between 4 and 22 nucleotides in length. This chain is 2-5A-dependent ribonuclease (Rnasel), found in Mus musculus (Mouse).